Consider the following 264-residue polypeptide: MMSDQENENEHAKAFLGLAKCEEEVDAIEREVELYRLNKMKPVYEKRDAYIDEIAEFWKIVLSQHVSFANYIRASDFKYIDTIDKIKVEWLALESEMYDTRDFSITFHFHGIEGDFKEQQVTKVFQIKKGKDDQEDGILTSEPVPIEWPQSYDSINPDLIKDKRSPEGKKKYRQGMKTIFGWFRWTGLKPGKEFPHGDSLASLFSEEIYPFCVKYYAEAQRDLEDEEGESGLSADGDSEDDDGSLGEVDLPLSDEEPSSKKRKV.

Ser-3 is subject to Phosphoserine. Residues 223-264 (LEDEEGESGLSADGDSEDDDGSLGEVDLPLSDEEPSSKKRKV) are disordered.

This sequence belongs to the nucleosome assembly protein (NAP) family. In terms of assembly, homodimer. Homotetramer. Forms a complex with RTT109; consisting of a VPS75 dimer contacted by two RTT109 subunits. Interacts with RTT109; the interaction is direct. Interacts with ASF1. Interacts with histone H3/H4 heterodimers and heterotetramers via histone H3.

The protein resides in the nucleus. Its function is as follows. Histone chaperone which acts as a cofactor stimulating histone H3 acetylation by RTT109. Preferentially stimulates histone H3 'Lys-9' acetylation by RTT109. May also stimulate histone H3 'Lys-56' acetylation by RTT109. Assembles nucleosomes (in vitro). This Saccharomyces cerevisiae (strain ATCC 204508 / S288c) (Baker's yeast) protein is Vacuolar protein sorting-associated protein 75 (VPS75).